Consider the following 611-residue polypeptide: Chaperone protein DnaK (611 aa).

The residue at position 173 (threonine 173) is a Phosphothreonine; by autocatalysis. Residues glutamine 577–alanine 592 show a composition bias toward low complexity. Residues glutamine 577 to lysine 611 are disordered. Residues valine 600–lysine 611 are compositionally biased toward acidic residues.

The protein belongs to the heat shock protein 70 family.

Its function is as follows. Acts as a chaperone. This is Chaperone protein DnaK from Bacillus cereus (strain G9842).